The primary structure comprises 244 residues: Mediator of RNA polymerase II transcription subunit 9 (244 aa).

Over residues Met-1–Asn-10 the composition is skewed to gly residues. Disordered regions lie at residues Met-1 to Asn-28 and Gln-96 to Gln-131. The segment covering Met-13–Asn-28 has biased composition (polar residues). 2 stretches are compositionally biased toward low complexity: residues Gln-96–Gln-111 and Thr-122–Gln-131. Positions Lys-212–Ile-239 form a coiled coil.

This sequence belongs to the plant Mediator complex subunit 9 family. As to quaternary structure, component of the Mediator complex. Interacts with MEE14/CBP1.

The protein localises to the nucleus. Component of the Mediator complex, a coactivator involved in the regulated transcription of nearly all RNA polymerase II-dependent genes. Mediator functions as a bridge to convey information from gene-specific regulatory proteins to the basal RNA polymerase II transcription machinery. The Mediator complex, having a compact conformation in its free form, is recruited to promoters by direct interactions with regulatory proteins and serves for the assembly of a functional pre-initiation complex with RNA polymerase II and the general transcription factors. This Arabidopsis thaliana (Mouse-ear cress) protein is Mediator of RNA polymerase II transcription subunit 9 (MED9).